Consider the following 124-residue polypeptide: Phycocyanin PC645 alpha-3 subunit (124 aa).

Residue Arg-71 participates in (2R,3E)-phycocyanobilin binding. Cys-73, Tyr-81, and Lys-97 together coordinate mesobiliverdin.

It belongs to the phycoerythrin family. Heterotetramer of 2 different alpha chains and 2 identical beta chains which form 2 alpha-beta heterodimers within the heterotetramer. Contains one phycocyanobilin chromophore and one mesobiliverdin chromophore with binding mediated by both the alpha and beta subunits.

It localises to the plastid. Its subcellular location is the chloroplast thylakoid membrane. Functionally, light-harvesting photosynthetic tetrapyrrole chromophore-protein from the phycobiliprotein complex. The polypeptide is Phycocyanin PC645 alpha-3 subunit (Chroomonas sp. (strain CCMP270)).